The chain runs to 370 residues: Acyl-CoA:lysophosphatidylglycerol acyltransferase 1 (370 aa).

A helical membrane pass occupies residues 22 to 42 (FAFMVVNNLVAIPSYICYVII). Residues 101 to 106 (HQATGD) carry the HXXXXD motif motif. The helical transmembrane segment at 342–362 (LWIFLIQSFAFLSGYMWYNII) threads the bilayer.

The protein belongs to the 1-acyl-sn-glycerol-3-phosphate acyltransferase family. As to expression, highly expressed in liver and placenta. Also expressed in peripheral blood, lung, kidney and brain. Detected at lower levels in colon. High expression is detected in brain and testis.

It localises to the endoplasmic reticulum membrane. It catalyses the reaction a 2-acyl-sn-glycero-3-phosphoethanolamine + octadecanoyl-CoA = 1-octadecanoyl-2-acyl-sn-glycero-3-phosphoethanolamine + CoA. The enzyme catalyses 2-(9Z-octadecenoyl)-sn-glycero-3-phosphoethanolamine + octadecanoyl-CoA = 1-octadecanoyl-2-(9Z-octadecenoyl)-sn-glycero-3-phosphoethanolamine + CoA. It carries out the reaction a 2-acyl-sn-glycero-3-phosphoethanolamine + hexadecanoyl-CoA = 1-hexadecanoyl-2-acyl-sn-glycero-3-phosphoethanolamine + CoA. The catalysed reaction is 2-(9Z-octadecenoyl)-sn-glycero-3-phosphoethanolamine + hexadecanoyl-CoA = 1-hexadecanoyl-2-(9Z-octadecenoyl)-sn-glycero-3-phosphoethanolamine + CoA. It catalyses the reaction 1-tetradecanoyl-sn-glycero-3-phospho-(1'-sn-glycerol) + hexadecanoyl-CoA = 1-tetradecanoyl-2-hexadecanoyl-sn-glycero-3-phospho-(1'-sn-glycerol) + CoA. The enzyme catalyses 1-hexadecanoyl-sn-glycero-3-phospho-(1'-sn-glycerol) + dodecanoyl-CoA = 1-hexadecanoyl-2-dodecanoyl-sn-glycero-3-phospho-(1'-sn-glycerol) + CoA. It carries out the reaction 1-hexadecanoyl-sn-glycero-3-phospho-(1'-sn-glycerol) + hexadecanoyl-CoA = 1,2-dihexadecanoyl-sn-glycero-3-phospho-(1'-sn-glycerol) + CoA. The catalysed reaction is 1-hexadecanoyl-sn-glycero-3-phospho-(1'-sn-glycerol) + octadecanoyl-CoA = 1-hexadecanoyl-2-octadecanoyl-sn-glycero-3-phospho-(1'-sn-glycerol) + CoA. It catalyses the reaction 1-octadecanoyl-sn-glycero-3-phospho-(1'-sn-glycerol) + hexadecanoyl-CoA = 1-octadecanoyl-2-hexadecanoyl-sn-glycero-3-phospho-(1'-sn-glycerol) + CoA. The enzyme catalyses 1-(9Z-octadecenoyl)-sn-glycero-3-phospho-(1'-sn-glycerol) + dodecanoyl-CoA = 1-(9Z-octadecenoyl)-2-dodecanoyl-sn-glycero-3-phospho-(1'-sn-glycerol) + CoA. It carries out the reaction 1-hexadecanoyl-sn-glycero-3-phospho-(1'-sn-glycerol) + (9Z)-octadecenoyl-CoA = 1-hexadecanoyl-2-(9Z-octadecenoyl)-sn-glycero-3-phospho-(1'-sn-glycerol) + CoA. The catalysed reaction is 1-(9Z-octadecenoyl)-sn-glycero-3-phospho-(1'-sn-glycerol) + hexadecanoyl-CoA = 1-(9Z-octadecenoyl)-2-hexadecanoyl-sn-glycero-3-phospho-(1'-sn-glycerol) + CoA. It catalyses the reaction 1-(9Z-octadecenoyl)-sn-glycero-3-phospho-(1'-sn-glycerol) + (9Z)-octadecenoyl-CoA = 1,2-di-(9Z-octadecenoyl)-sn-glycero-3-phospho-(1'-sn-glycerol) + CoA. The enzyme catalyses a 2-acylglycerol + an acyl-CoA = a 1,2-diacylglycerol + CoA. It carries out the reaction a 2-acylglycerol + hexadecanoyl-CoA = a 1-hexadecanoyl-2-acylglycerol + CoA. The catalysed reaction is a 1-acylglycerol + hexadecanoyl-CoA = an hexadecanoyl-acylglycerol + CoA. It catalyses the reaction a 2-acyl-sn-glycero-3-phosphocholine + an acyl-CoA = a 1,2-diacyl-sn-glycero-3-phosphocholine + CoA. The enzyme catalyses 2-(9Z-octadecenoyl)-sn-glycero-3-phosphocholine + octadecanoyl-CoA = 1-octadecanoyl-2-(9Z-octadecenoyl)-sn-glycero-3-phosphocholine + CoA. It carries out the reaction 2-(9Z,12Z-octadecadienoyl)-sn-glycero-3-phosphocholine + octadecanoyl-CoA = 1-octadecanoyl-2-(9Z,12Z)-octadecadienoyl-sn-glycero-3-phosphocholine + CoA. The catalysed reaction is 2-(5Z,8Z,11Z,14Z)-eicosatetraenoyl-sn-glycero-3-phosphocholine + octadecanoyl-CoA = 1-octadecanoyl-2-(5Z,8Z,11Z,14Z-eicosatetraenoyl)-sn-glycero-3-phosphocholine + CoA. It catalyses the reaction 2-(9Z-octadecenoyl)-sn-glycero-3-phosphocholine + hexadecanoyl-CoA = 1-hexadecanoyl-2-(9Z-octadecenoyl)-sn-glycero-3-phosphocholine + CoA. The enzyme catalyses 2-(9Z-octadecenoyl)-sn-glycero-3-phospho-L-serine + hexadecanoyl-CoA = 1-hexadecanoyl-2-(9Z-octadecenoyl)-sn-glycero-3-phospho-L-serine + CoA. It carries out the reaction 2-(4Z,7Z,10Z,13Z,16Z,19Z-docosahexaenoyl)-sn-glycero-3-phosphocholine + octadecanoyl-CoA = 1-octadecanoyl-2-(4Z,7Z,10Z,13Z,16Z,19Z-docosahexaenoyl)-sn-glycero-3-phosphocholine + CoA. The catalysed reaction is 1-(9Z-octadecenoyl)-sn-glycero-3-phospho-L-serine + octadecanoyl-CoA = 1-(9Z-octadecenoyl)-2-octadecanoyl-sn-glycero-3-phospho-L-serine + CoA. It catalyses the reaction a 2-acyl-sn-glycero-3-phosphoethanolamine + a fatty acyl-CoA = a 1,2-diacyl-sn-glycero-3-phosphoethanolamine + CoA. Its function is as follows. Lysophospholipid acyltransferase involved in fatty acyl chain remodeling of glycerophospholipids in the endoplasmic reticulum membrane. Selectively catalyzes the transfer and esterification of saturated long-chain fatty acids from acyl-CoA to the sn-1 position of 1-lyso-2-acyl phosphatidylethanolamines (1-lyso-PE, LPE), with a preference for stearoyl CoA over palmitoyl CoA as acyl donor. Acts in concert with an unknown phospholipase A1 to convert palmitate phosphatidylethanolamine (PE) species into stearate ones. Provides substrates to the PE methylation pathway, controlling stearate/palmitate composition of PE and phosphatidylcholine (PC) species with an overall impact on de novo hepatic lipid synthesis, body fat content and life span. Can acylate lysophosphatidylglycerols (LPG) using various saturated fatty acyl-CoAs as acyl donors. Can also acylate monoacylglycerols with a preference for 2-monoacylglycerols over 1-monoacylglycerols. Has no activity toward lysophosphatidic acids (LPA). This chain is Acyl-CoA:lysophosphatidylglycerol acyltransferase 1, found in Homo sapiens (Human).